The sequence spans 354 residues: Guanine nucleotide-binding protein alpha-16 subunit (354 aa).

G2 carries N-myristoyl glycine lipidation. C3 carries the S-palmitoyl cysteine lipid modification. The G-alpha domain maps to 31 to 354 (KTVKLLLLGA…RDNLRTCGLY (324 aa)). The tract at residues 34–47 (KLLLLGAGESGKST) is G1 motif. GTP-binding positions include 39–46 (GAGESGKS), 174–180 (LRTRIKT), 199–203 (DVGGQ), 268–271 (NKKD), and A326. Mg(2+)-binding residues include S46 and T180. The G2 motif stretch occupies residues 172–180 (DVLRTRIKT). A G3 motif region spans residues 195–204 (FVVFDVGGQR). Residues 264 to 271 (ILFLNKKD) are G4 motif. The tract at residues 324 to 329 (TCATDT) is G5 motif.

This sequence belongs to the G-alpha family. As to quaternary structure, g proteins are composed of 3 units; alpha, beta and gamma. The alpha chain contains the guanine nucleotide binding site.

In terms of biological role, guanine nucleotide-binding proteins (G proteins) are involved as modulators or transducers in various transmembrane signaling systems. In the 1-cell embryo, probably together with goa-1, controls nuclear rotation and spindle elongation during mitosis. During the first embryonic cell divisons, plays a role in gpr-1/2 cortical localization and in the proper orientation of EMS blastomere mitotic spindle. The protein is Guanine nucleotide-binding protein alpha-16 subunit (gpa-16) of Caenorhabditis briggsae.